The chain runs to 462 residues: Argininosuccinate lyase (462 aa).

Belongs to the lyase 1 family. Argininosuccinate lyase subfamily.

The protein localises to the cytoplasm. It carries out the reaction 2-(N(omega)-L-arginino)succinate = fumarate + L-arginine. It functions in the pathway amino-acid biosynthesis; L-arginine biosynthesis; L-arginine from L-ornithine and carbamoyl phosphate: step 3/3. The chain is Argininosuccinate lyase from Chloroflexus aggregans (strain MD-66 / DSM 9485).